Here is a 330-residue protein sequence, read N- to C-terminus: Cytoplasmic envelopment protein 2 (330 aa).

This sequence belongs to the herpesviridae cytoplasmic envelopment protein 2 family. In terms of assembly, interacts with cytoplasmic envelopment protein 3 and with the capsid.

Its subcellular location is the virion tegument. The protein localises to the host cytoplasm. The protein resides in the host nucleus. Its function is as follows. Plays a critical role in cytoplasmic virus egress. Participates in the final step of tegumentation and envelope acquisition within the host cytoplasm by directly interacting with the capsid. Upon virion binding to target cell, a signaling cascade is triggered to disrupt the interaction with the capsid, thereby preparing capsid uncoating. The protein is Cytoplasmic envelopment protein 2 (33) of Saimiriine herpesvirus 2 (strain 11) (SaHV-2).